We begin with the raw amino-acid sequence, 183 residues long: Caspase recruitment domain-containing protein 19 (183 aa).

Cys-7 and Cys-77 are oxidised to a cystine. The CARD domain maps to 8-99 (DRLVQDTPFL…PLHSHLPSRY (92 aa)). The helical transmembrane segment at 122–142 (GPMSFLAGLGLAAGLALLLYC) threads the bilayer.

As to quaternary structure, associates with BCL10 by CARD-CARD interaction.

It is found in the endoplasmic reticulum membrane. The protein localises to the mitochondrion membrane. Functionally, plays a role in inhibiting the effects of BCL10-induced activation of NF-kappa-B. This Mus musculus (Mouse) protein is Caspase recruitment domain-containing protein 19.